We begin with the raw amino-acid sequence, 653 residues long: MRPLRPRAALLALLASLLAAPPVAPAEAPHLVHVDAARALWPLRRFWRSTGFCPPLPHSQADQYVLSWDQQLNLAYVGAVPHRGIKQVRTHWLLELVTTRGSTGRGLSYNFTHLDGYLDLLRENQLLPGFELMGSASGHFTDFEDKQQVFEWKDLVSSLARRYIGRYGLAHVSKWNFETWNEPDHHDFDNVSMTMQGFLNYYDACSEGLRAASPALRLGGPGDSFHTPPRSPLSWGLLRHCHDGTNFFTGEAGVRLDYISLHRKGARSSISILEQEKVVAQQIRQLFPKFADTPIYNDEADPLVGWSLPQPWRADVTYAAMVVKVIAQHQNLLLANTTSAFPYALLSNDNAFLSYHPHPFAQRTLTARFQVNNTRPPHVQLLRKPVLTAMGLLALLDEEQLWAEVSQAGTVLDSNHTVGVLASAHRPQGPADAWRAAVLIYASDDTRAHPNRSVAVTLRLRGVPPGPGLVYVTRYLDNGLCSPDGEWRRLGRPVFPTAEQFRRMRAAEDPVAAAPRPLPAGGRLTLRPALRLPSLLLVHVCARPEKPPGQVTRLRALPLTQGQLVLVWSDEHVGSKCLWTYEIQFSQDGKAYTPVSRKPSTFNLFVFSPDTGAVSGSYRVRALDYWARPGPFSDPVPYLEVPVPRGPPSPGNP.

The N-terminal stretch at 1–27 (MRPLRPRAALLALLASLLAAPPVAPAE) is a signal peptide. Alpha-D-mannopyranose contacts are provided by Pro-54, Leu-56, and His-58. His-91 lines the alpha-L-iduronate pocket. An N-linked (GlcNAc...) asparagine glycan is attached at Asn-110. Residues Asn-181 and Glu-182 each contribute to the alpha-L-iduronate site. The active-site Proton donor is the Glu-182. An N-linked (GlcNAc...) asparagine glycan is attached at Asn-190. Alpha-L-iduronate contacts are provided by Lys-264, Glu-299, and Gly-305. Residue Glu-299 is the Nucleophile of the active site. Trp-306 provides a ligand contact to alpha-D-mannopyranose. A glycan (N-linked (GlcNAc...) asparagine) is linked at Asn-336. Alpha-L-iduronate contacts are provided by Asp-349 and Arg-363. Asn-372, Asn-415, and Asn-451 each carry an N-linked (GlcNAc...) asparagine glycan. The alpha-D-mannopyranose site is built by Arg-488 and Arg-492. Residue Arg-492 participates in beta-D-mannose binding. Cysteines 541 and 577 form a disulfide.

It belongs to the glycosyl hydrolase 39 family. As to quaternary structure, monomer. In terms of processing, N-glycosylation at Asn-372 contributes to substrate binding and is required for full enzymatic activity. In terms of tissue distribution, ubiquitous.

Its subcellular location is the lysosome. It catalyses the reaction Hydrolysis of unsulfated alpha-L-iduronosidic linkages in dermatan sulfate.. This chain is Alpha-L-iduronidase (IDUA), found in Homo sapiens (Human).